We begin with the raw amino-acid sequence, 143 residues long: Large ribosomal subunit protein uL13c (143 aa).

The protein belongs to the universal ribosomal protein uL13 family. In terms of assembly, part of the 50S ribosomal subunit.

It localises to the plastid. Its subcellular location is the chloroplast. This Guillardia theta (Cryptophyte) protein is Large ribosomal subunit protein uL13c.